A 378-amino-acid chain; its full sequence is Probable dihydroorotase-like protein (378 aa).

Belongs to the metallo-dependent hydrolases superfamily. DHOase family. PyrC' subfamily.

In terms of biological role, non-functional DHOase. In Helicobacter pylori (strain ATCC 700392 / 26695) (Campylobacter pylori), this protein is Probable dihydroorotase-like protein (pyrC').